The sequence spans 71 residues: MNYIAAAIAIMGAAIGAGYGNGQVISKTIESMARQPEMSGQLRTTMFIGVALVEAVPILGVVIALILVFAV.

A run of 2 helical transmembrane segments spans residues 4–24 (IAAA…NGQV) and 47–67 (FIGV…ALIL).

This sequence belongs to the ATPase C chain family. F-type ATPases have 2 components, F(1) - the catalytic core - and F(0) - the membrane proton channel. F(1) has five subunits: alpha(3), beta(3), gamma(1), delta(1), epsilon(1). F(0) has three main subunits: a(1), b(2) and c(10-14). The alpha and beta chains form an alternating ring which encloses part of the gamma chain. F(1) is attached to F(0) by a central stalk formed by the gamma and epsilon chains, while a peripheral stalk is formed by the delta and b chains.

Its subcellular location is the cell membrane. Functionally, f(1)F(0) ATP synthase produces ATP from ADP in the presence of a proton or sodium gradient. F-type ATPases consist of two structural domains, F(1) containing the extramembraneous catalytic core and F(0) containing the membrane proton channel, linked together by a central stalk and a peripheral stalk. During catalysis, ATP synthesis in the catalytic domain of F(1) is coupled via a rotary mechanism of the central stalk subunits to proton translocation. In terms of biological role, key component of the F(0) channel; it plays a direct role in translocation across the membrane. A homomeric c-ring of between 10-14 subunits forms the central stalk rotor element with the F(1) delta and epsilon subunits. The protein is ATP synthase subunit c of Enterococcus hirae (strain ATCC 9790 / DSM 20160 / JCM 8729 / LMG 6399 / NBRC 3181 / NCIMB 6459 / NCDO 1258 / NCTC 12367 / WDCM 00089 / R).